We begin with the raw amino-acid sequence, 88 residues long: Small ribosomal subunit protein uS15c (88 aa).

It belongs to the universal ribosomal protein uS15 family. In terms of assembly, part of the 30S ribosomal subunit.

It is found in the plastid. The protein localises to the chloroplast. The chain is Small ribosomal subunit protein uS15c (rps15) from Physcomitrium patens (Spreading-leaved earth moss).